A 1021-amino-acid polypeptide reads, in one-letter code: Transmembrane protein 132A (1021 aa).

An N-terminal signal peptide occupies residues 1–32 (MTERAAAAPRGPYGAWLCLLVALALEVVRVGS). At 33–848 (NQNTLDPIYL…VTDLELGMYA (816 aa)) the chain is on the extracellular side. Positions 207 to 226 (PAGEGPGGCGPGTEEEPKEQ) are disordered. The N-linked (GlcNAc...) asparagine glycan is linked to asparagine 276. The tract at residues 606–913 (IEVRSPLSDS…QLDRCSSSSP (308 aa)) is binds to HSPA5/GRP78. The confers cellular localization similar to full-length form stretch occupies residues 666-1021 (LPAPKQEVAL…NYMERIRGSS (356 aa)). The segment at 793-835 (AGDMGSHVGPGIRGKFERAEEEAGKEENEAKEEEEDEEEMVPA) is disordered. Over residues 806–820 (GKFERAEEEAGKEEN) the composition is skewed to basic and acidic residues. Residues 821–832 (EAKEEEEDEEEM) are compositionally biased toward acidic residues. A helical membrane pass occupies residues 849-869 (LLGIFCLAFLIFLVNGVVFVL). The Cytoplasmic segment spans residues 870–1021 (RYQRKEPPDS…NYMERIRGSS (152 aa)). Positions 903-955 (RQLDRCSSSSPPKGEGGCPCESGAGGDTSTVAPSASESPAGSTSTLARKEAGG) are disordered. Residues 929 to 948 (DTSTVAPSASESPAGSTSTL) show a composition bias toward polar residues.

The protein belongs to the TMEM132 family. As to quaternary structure, interacts with HSPA5/GRP78. Expressed in the brain in neuronal cells of the hypothalamus, thalamus, cerebral cortex, amygdala, and cerebellum.

The protein resides in the golgi apparatus membrane. The protein localises to the endoplasmic reticulum membrane. Its function is as follows. May play a role in embryonic and postnatal development of the brain. Increased resistance to cell death induced by serum starvation in cultured cells. Regulates cAMP-induced GFAP gene expression via STAT3 phosphorylation. The polypeptide is Transmembrane protein 132A (Tmem132a) (Rattus norvegicus (Rat)).